The chain runs to 133 residues: Hydrogenase maturation factor HypA (133 aa).

H2 contributes to the Ni(2+) binding site. The Zn(2+) site is built by C73, C75, C105, and C108.

Belongs to the HypA/HybF family.

In terms of biological role, involved in the maturation of [NiFe] hydrogenases. Required for nickel insertion into the metal center of the hydrogenase. In Methanosarcina barkeri (strain Fusaro / DSM 804), this protein is Hydrogenase maturation factor HypA.